The sequence spans 369 residues: Phospho-N-acetylmuramoyl-pentapeptide-transferase (369 aa).

Transmembrane regions (helical) follow at residues 2-22 (IALLIGAGVALLVALIGTPLF), 55-75 (TVVVAAVLISYFVTHLIMWMM), 86-106 (GLLLLFLMVGMGFVGFLDDFI), 120-140 (AKLILQAAVGIIFAVLVLQFP), 163-183 (LAFGGTVVGAILFVLWSNLII), 196-216 (LDGLAAGASIMVFGAYTIMGI), 239-259 (PMDLALLAAILSAALVGFLWW), 266-286 (IFMGDTGSLAIGGAVAAFAIL), 291-311 (LLLAFIGGLFVLITLSVIIQV), and 348-368 (ILAGLFVAAGLGIFYAEWVVL).

It belongs to the glycosyltransferase 4 family. MraY subfamily. The cofactor is Mg(2+).

Its subcellular location is the cell membrane. The catalysed reaction is UDP-N-acetyl-alpha-D-muramoyl-L-alanyl-gamma-D-glutamyl-meso-2,6-diaminopimeloyl-D-alanyl-D-alanine + di-trans,octa-cis-undecaprenyl phosphate = di-trans,octa-cis-undecaprenyl diphospho-N-acetyl-alpha-D-muramoyl-L-alanyl-D-glutamyl-meso-2,6-diaminopimeloyl-D-alanyl-D-alanine + UMP. It participates in cell wall biogenesis; peptidoglycan biosynthesis. Its function is as follows. Catalyzes the initial step of the lipid cycle reactions in the biosynthesis of the cell wall peptidoglycan: transfers peptidoglycan precursor phospho-MurNAc-pentapeptide from UDP-MurNAc-pentapeptide onto the lipid carrier undecaprenyl phosphate, yielding undecaprenyl-pyrophosphoryl-MurNAc-pentapeptide, known as lipid I. This Paenarthrobacter aurescens (strain TC1) protein is Phospho-N-acetylmuramoyl-pentapeptide-transferase.